The sequence spans 389 residues: Flap endonuclease 1 (389 aa).

The N-domain stretch occupies residues 1–105 (MGIKGLNKLL…GELAKRKERR (105 aa)). A Mg(2+)-binding site is contributed by Asp34. Positions 47 and 71 each coordinate DNA. Residues Asp87, Glu170, Glu172, Asp191, and Asp193 each coordinate Mg(2+). The tract at residues 134-265 (DVTRFEKRTV…QTALKLMKEH (132 aa)) is I-domain. A DNA-binding site is contributed by Glu170. Residues Gly243 and Asp245 each coordinate DNA. Position 245 (Asp245) interacts with Mg(2+). An interaction with PCNA region spans residues 351-359 (PQARLDGFF). Residues 360 to 389 (KVMPKEGGEKRKADDKKTKGKKPATKKAKK) are disordered. The segment covering 362 to 376 (MPKEGGEKRKADDKK) has biased composition (basic and acidic residues). Basic residues predominate over residues 377–389 (TKGKKPATKKAKK).

Belongs to the XPG/RAD2 endonuclease family. FEN1 subfamily. In terms of assembly, interacts with PCNA. Three molecules of FEN1 bind to one PCNA trimer with each molecule binding to one PCNA monomer. PCNA stimulates the nuclease activity without altering cleavage specificity. Requires Mg(2+) as cofactor. Post-translationally, phosphorylated. Phosphorylation upon DNA damage induces relocalization to the nuclear plasma.

Its subcellular location is the nucleus. The protein resides in the nucleolus. It localises to the nucleoplasm. It is found in the mitochondrion. In terms of biological role, structure-specific nuclease with 5'-flap endonuclease and 5'-3' exonuclease activities involved in DNA replication and repair. During DNA replication, cleaves the 5'-overhanging flap structure that is generated by displacement synthesis when DNA polymerase encounters the 5'-end of a downstream Okazaki fragment. It enters the flap from the 5'-end and then tracks to cleave the flap base, leaving a nick for ligation. Also involved in the long patch base excision repair (LP-BER) pathway, by cleaving within the apurinic/apyrimidinic (AP) site-terminated flap. Acts as a genome stabilization factor that prevents flaps from equilibrating into structures that lead to duplications and deletions. Also possesses 5'-3' exonuclease activity on nicked or gapped double-stranded DNA, and exhibits RNase H activity. Also involved in replication and repair of rDNA and in repairing mitochondrial DNA. The protein is Flap endonuclease 1 of Yarrowia lipolytica (strain CLIB 122 / E 150) (Yeast).